Consider the following 377-residue polypeptide: N-acetyldiaminopimelate deacetylase (377 aa).

Asp70 is a catalytic residue. The active-site Proton acceptor is the Glu129.

This sequence belongs to the peptidase M20A family. N-acetyldiaminopimelate deacetylase subfamily.

The enzyme catalyses N-acetyl-(2S,6S)-2,6-diaminopimelate + H2O = (2S,6S)-2,6-diaminopimelate + acetate. The protein operates within amino-acid biosynthesis; L-lysine biosynthesis via DAP pathway; LL-2,6-diaminopimelate from (S)-tetrahydrodipicolinate (acetylase route): step 3/3. Its function is as follows. Catalyzes the conversion of N-acetyl-diaminopimelate to diaminopimelate and acetate. The sequence is that of N-acetyldiaminopimelate deacetylase from Geobacillus thermodenitrificans (strain NG80-2).